The sequence spans 175 residues: MTMCSGARLALLVYGIIMHSSVSCSPAAGLSFPGIRPEDEAYDQDGNPLQDFYDWDPPGVGSPASALRDAYALYYPADRRDVAHEILNEAYRKVLDQLSARKYLQSVVARGAGENLGGSAVDDPAPLTKRHSDGIFTDSYSRYRKQMAVKKYLAAVLGKRYKQRVKNKGRRIAYL.

A signal peptide spans 1-24 (MTMCSGARLALLVYGIIMHSSVSC). Residues 25 to 78 (SPAAGLSFPGIRPEDEAYDQDGNPLQDFYDWDPPGVGSPASALRDAYALYYPAD) constitute a propeptide that is removed on maturation. The tract at residues 149–157 (VKKYLAAVL) is important for receptor binding. Leu-157 is subject to Leucine amide. A Lysine amide modification is found at Lys-168. Residues 172–175 (IAYL) constitute a propeptide that is removed on maturation.

This sequence belongs to the glucagon family.

The protein resides in the secreted. In terms of biological role, PACAP is a neuropeptide involved in diverse array of physiological processes through activating the PACAP subfamily of class B1 G protein-coupled receptors: VIP receptor 1 (VIPR1), VIP receptor 2 (VIPR2), and PACAP type I receptor (ADCYAP1R1). Exerts neuroprotective and general cytoprotective effects due to anti-apoptotic, anti-inflammatory, and antioxidant actions. Promotes neuron projection development through the RAPGEF2/Rap1/B-Raf/ERK pathway. In chromaffin cells, induces long-lasting increase of intracellular calcium concentrations and neuroendocrine secretion. Involved in the control of glucose homeostasis, induces insulin secretion by pancreatic beta cells. PACAP exists in two bioactive forms from proteolysis of the same precursor protein, PACAP27 and PACAP38, which differ by eleven amino acid residues in the C-terminus. In Mus musculus (Mouse), this protein is Pituitary adenylate cyclase-activating polypeptide.